The following is a 250-amino-acid chain: ATP synthase subunit a (250 aa).

5 consecutive transmembrane segments (helical) span residues 27 to 47 (TDTVLSTAIAALIVLALAFYL), 83 to 103 (IAPFVLPLAVTIFVFILISNW), 129 to 149 (INYVLALALFVFVCYHAAGIW), 191 to 211 (IFAGGILVALIALFPPYIMWA), and 219 to 239 (FDLFVGAIQAFIFALLTILYF).

This sequence belongs to the ATPase A chain family. As to quaternary structure, F-type ATPases have 2 components, CF(1) - the catalytic core - and CF(0) - the membrane proton channel. CF(1) has five subunits: alpha(3), beta(3), gamma(1), delta(1), epsilon(1). CF(0) has three main subunits: a(1), b(2) and c(9-12). The alpha and beta chains form an alternating ring which encloses part of the gamma chain. CF(1) is attached to CF(0) by a central stalk formed by the gamma and epsilon chains, while a peripheral stalk is formed by the delta and b chains.

The protein localises to the cell membrane. Key component of the proton channel; it plays a direct role in the translocation of protons across the membrane. In Mycobacterium marinum (strain ATCC BAA-535 / M), this protein is ATP synthase subunit a.